The following is a 326-amino-acid chain: Biotin synthase (326 aa).

The Radical SAM core domain occupies 51–275; the sequence is NAVQRSTLLS…MMPTSFVRLS (225 aa). [4Fe-4S] cluster is bound by residues C66, C70, and C73. [2Fe-2S] cluster contacts are provided by C110, C141, C201, and R273.

The protein belongs to the radical SAM superfamily. Biotin synthase family. As to quaternary structure, homodimer. [4Fe-4S] cluster is required as a cofactor. It depends on [2Fe-2S] cluster as a cofactor.

The catalysed reaction is (4R,5S)-dethiobiotin + (sulfur carrier)-SH + 2 reduced [2Fe-2S]-[ferredoxin] + 2 S-adenosyl-L-methionine = (sulfur carrier)-H + biotin + 2 5'-deoxyadenosine + 2 L-methionine + 2 oxidized [2Fe-2S]-[ferredoxin]. The protein operates within cofactor biosynthesis; biotin biosynthesis; biotin from 7,8-diaminononanoate: step 2/2. Catalyzes the conversion of dethiobiotin (DTB) to biotin by the insertion of a sulfur atom into dethiobiotin via a radical-based mechanism. In Aromatoleum aromaticum (strain DSM 19018 / LMG 30748 / EbN1) (Azoarcus sp. (strain EbN1)), this protein is Biotin synthase.